We begin with the raw amino-acid sequence, 220 residues long: Ribosomal RNA large subunit methyltransferase E (220 aa).

5 residues coordinate S-adenosyl-L-methionine: G60, W62, D92, D108, and D133. K173 (proton acceptor) is an active-site residue.

Belongs to the class I-like SAM-binding methyltransferase superfamily. RNA methyltransferase RlmE family.

It is found in the cytoplasm. The catalysed reaction is uridine(2552) in 23S rRNA + S-adenosyl-L-methionine = 2'-O-methyluridine(2552) in 23S rRNA + S-adenosyl-L-homocysteine + H(+). Specifically methylates the uridine in position 2552 of 23S rRNA at the 2'-O position of the ribose in the fully assembled 50S ribosomal subunit. The polypeptide is Ribosomal RNA large subunit methyltransferase E (Paraburkholderia xenovorans (strain LB400)).